The sequence spans 75 residues: Putative defensin-like protein 271 (75 aa).

The first 23 residues, 1–23, serve as a signal peptide directing secretion; it reads MTSMKLHIVALCIIVSFLVNVQS. Disulfide bonds link Cys33–Cys72, Cys39–Cys61, Cys45–Cys70, and Cys49–Cys71.

It belongs to the DEFL family.

Its subcellular location is the secreted. This Arabidopsis thaliana (Mouse-ear cress) protein is Putative defensin-like protein 271.